A 142-amino-acid polypeptide reads, in one-letter code: Group IIE secretory phospholipase A2 (142 aa).

The signal sequence occupies residues 1-19 (MKPPIALACLCLLVPLAGG). Positions 41, 43, 45, 47, and 49 each coordinate Ca(2+). 7 disulfides stabilise this stretch: cysteine 44–cysteine 135, cysteine 46–cysteine 62, cysteine 61–cysteine 115, cysteine 67–cysteine 142, cysteine 68–cysteine 108, cysteine 77–cysteine 101, and cysteine 95–cysteine 106. Residue histidine 65 is part of the active site. A Ca(2+)-binding site is contributed by aspartate 66. The active site involves aspartate 109. Tyrosine 130 and asparagine 132 together coordinate Ca(2+).

Belongs to the phospholipase A2 family. Ca(2+) serves as cofactor. Highly expressed in skin and uterus, and at lower levels in various other tissues. Expressed in hair follicles, specifically localized in companion cells of the outer root sheath and cuticular cells of the inner root sheath in hair follicles during anagen. Expressed in white and brown adipose tissue.

Its subcellular location is the secreted. The protein localises to the cytoplasm. It catalyses the reaction a 1,2-diacyl-sn-glycero-3-phosphoethanolamine + H2O = a 1-acyl-sn-glycero-3-phosphoethanolamine + a fatty acid + H(+). The enzyme catalyses 1-hexadecanoyl-2-(9Z-octadecenoyl)-sn-glycero-3-phosphoethanolamine + H2O = 1-hexadecanoyl-sn-glycero-3-phosphoethanolamine + (9Z)-octadecenoate + H(+). It carries out the reaction 1-hexadecanoyl-2-(9Z,12Z-octadecadienoyl)-sn-glycero-3-phosphoethanolamine + H2O = 1-hexadecanoyl-sn-glycero-3-phosphoethanolamine + (9Z,12Z)-octadecadienoate + H(+). The catalysed reaction is 1-hexadecanoyl-2-(5Z,8Z,11Z,14Z-eicosatetraenoyl)-sn-glycero-3-phosphoethanolamine + H2O = 1-hexadecanoyl-sn-glycero-3-phosphoethanolamine + (5Z,8Z,11Z,14Z)-eicosatetraenoate + H(+). It catalyses the reaction 1,2-dihexadecanoyl-sn-glycero-3-phospho-(1'-sn-glycerol) + H2O = 1-hexadecanoyl-sn-glycero-3-phospho-(1'-sn-glycerol) + hexadecanoate + H(+). The enzyme catalyses 1-hexadecanoyl-2-(9Z-octadecenoyl)-sn-glycero-3-phosphoglycerol + H2O = 1-hexadecanoyl-sn-glycero-3-phosphoglycerol + (9Z)-octadecenoate + H(+). It carries out the reaction a 1,2-diacyl-sn-glycero-3-phosphocholine + H2O = a 1-acyl-sn-glycero-3-phosphocholine + a fatty acid + H(+). The catalysed reaction is 1,2-dihexadecanoyl-sn-glycero-3-phosphocholine + H2O = 1-hexadecanoyl-sn-glycero-3-phosphocholine + hexadecanoate + H(+). It catalyses the reaction 1-hexadecanoyl-2-(9Z-octadecenoyl)-sn-glycero-3-phosphocholine + H2O = 1-hexadecanoyl-sn-glycero-3-phosphocholine + (9Z)-octadecenoate + H(+). The enzyme catalyses 1-hexadecanoyl-2-(9Z,12Z-octadecadienoyl)-sn-glycero-3-phosphocholine + H2O = (9Z,12Z)-octadecadienoate + 1-hexadecanoyl-sn-glycero-3-phosphocholine + H(+). It carries out the reaction 1-hexadecanoyl-2-(4Z,7Z,10Z,13Z,16Z,19Z-docosahexaenoyl)-sn-glycero-3-phosphocholine + H2O = (4Z,7Z,10Z,13Z,16Z,19Z)-docosahexaenoate + 1-hexadecanoyl-sn-glycero-3-phosphocholine + H(+). Secretory calcium-dependent phospholipase A2 that primarily targets extracellular phospholipids. Hydrolyzes the ester bond of the fatty acyl group attached at sn-2 position of phospholipids (phospholipase A2 activity), releasing various unsaturated fatty acids including oleoate, linoleoate, arachidonate, docosahexaenoate and lysophosphatidylethanolamines in preference to lysophosphatidylcholines. In response to high-fat diet, hydrolyzes minor lipoprotein phospholipids including phosphatidylserines, phosphatidylinositols and phosphatidylglycerols, altering lipoprotein composition and fat storage in adipose tissue and liver. May act in an autocrine and paracrine manner. Contributes to lipid remodeling of cellular membranes and generation of lipid mediators involved in pathogen clearance. Cleaves sn-2 fatty acyl chains of phosphatidylglycerols and phosphatidylethanolamines, which are major components of membrane phospholipids in bacteria. Acts as a hair follicle phospholipase A2. Selectively releases lysophosphatidylethanolamines (LPE) and various unsaturated fatty acids in skin to regulate hair follicle homeostasis. May regulate the inflammatory response by releasing arachidonate, a precursor of prostaglandins and leukotrienes. Upon allergen exposure, may participate in allergic inflammatory response by enhancing leukotriene C4 synthesis and degranulation in mast cells. The chain is Group IIE secretory phospholipase A2 (Pla2g2e) from Mus musculus (Mouse).